The following is a 505-amino-acid chain: Putative thymidine phosphorylase (505 aa).

Belongs to the thymidine/pyrimidine-nucleoside phosphorylase family. Type 2 subfamily.

It catalyses the reaction thymidine + phosphate = 2-deoxy-alpha-D-ribose 1-phosphate + thymine. In Tolumonas auensis (strain DSM 9187 / NBRC 110442 / TA 4), this protein is Putative thymidine phosphorylase.